Reading from the N-terminus, the 159-residue chain is Small ribosomal subunit protein uS4 (159 aa).

Residues 106-158 (RRLQTIVYRMGLAKSIHHARQLIVHGHVAVAGRRVTSPGFLVPRELEDKISLI) form the S4 RNA-binding domain.

It belongs to the universal ribosomal protein uS4 family. Part of the 30S ribosomal subunit. Contacts protein S5. The interaction surface between S4 and S5 is involved in control of translational fidelity.

One of the primary rRNA binding proteins, it binds directly to 16S rRNA where it nucleates assembly of the body of the 30S subunit. Its function is as follows. With S5 and S12 plays an important role in translational accuracy. This Pyrobaculum aerophilum (strain ATCC 51768 / DSM 7523 / JCM 9630 / CIP 104966 / NBRC 100827 / IM2) protein is Small ribosomal subunit protein uS4.